We begin with the raw amino-acid sequence, 232 residues long: tRNA (guanine-N(1)-)-methyltransferase (232 aa).

S-adenosyl-L-methionine is bound at residue Gly116.

It belongs to the RNA methyltransferase TrmD family. As to quaternary structure, homodimer.

The protein localises to the cytoplasm. The enzyme catalyses guanosine(37) in tRNA + S-adenosyl-L-methionine = N(1)-methylguanosine(37) in tRNA + S-adenosyl-L-homocysteine + H(+). Functionally, specifically methylates guanosine-37 in various tRNAs. In Chlorobium luteolum (strain DSM 273 / BCRC 81028 / 2530) (Pelodictyon luteolum), this protein is tRNA (guanine-N(1)-)-methyltransferase.